Reading from the N-terminus, the 616-residue chain is Dihydroxy-acid dehydratase (616 aa).

D81 is a binding site for Mg(2+). A [2Fe-2S] cluster-binding site is contributed by C122. Positions 123 and 124 each coordinate Mg(2+). The residue at position 124 (K124) is an N6-carboxylysine. Residue C195 coordinates [2Fe-2S] cluster. E491 serves as a coordination point for Mg(2+). The active-site Proton acceptor is S517.

It belongs to the IlvD/Edd family. In terms of assembly, homodimer. It depends on [2Fe-2S] cluster as a cofactor. Requires Mg(2+) as cofactor.

It catalyses the reaction (2R)-2,3-dihydroxy-3-methylbutanoate = 3-methyl-2-oxobutanoate + H2O. The enzyme catalyses (2R,3R)-2,3-dihydroxy-3-methylpentanoate = (S)-3-methyl-2-oxopentanoate + H2O. Its pathway is amino-acid biosynthesis; L-isoleucine biosynthesis; L-isoleucine from 2-oxobutanoate: step 3/4. The protein operates within amino-acid biosynthesis; L-valine biosynthesis; L-valine from pyruvate: step 3/4. Its function is as follows. Functions in the biosynthesis of branched-chain amino acids. Catalyzes the dehydration of (2R,3R)-2,3-dihydroxy-3-methylpentanoate (2,3-dihydroxy-3-methylvalerate) into 2-oxo-3-methylpentanoate (2-oxo-3-methylvalerate) and of (2R)-2,3-dihydroxy-3-methylbutanoate (2,3-dihydroxyisovalerate) into 2-oxo-3-methylbutanoate (2-oxoisovalerate), the penultimate precursor to L-isoleucine and L-valine, respectively. This chain is Dihydroxy-acid dehydratase, found in Yersinia pseudotuberculosis serotype O:3 (strain YPIII).